The chain runs to 218 residues: Peroxiredoxin-like 2A (218 aa).

Residues 3–101 (MWSIGVGAVG…DELGVPLYAV (99 aa)) form a thioredoxin-like fold region. Residues Cys74 and Cys77 each act as redox-active in the active site.

Belongs to the peroxiredoxin-like PRXL2 family. PRXL2A subfamily. Expressed in kidney, liver, skin, and brain. Widely expressed with highest levels detected in adipose tissue.

Its subcellular location is the cytoplasm. The protein resides in the secreted. In terms of biological role, involved in redox regulation of the cell. Acts as an antioxidant. Inhibits TNFSF11-induced NFKB1 and JUN activation and osteoclast differentiation. May affect bone resorption and help to maintain bone mass. Acts as a negative regulator of macrophage-mediated inflammation by inhibiting macrophage production of inflammatory cytokines, probably through suppression of the MAPK signaling pathway. The chain is Peroxiredoxin-like 2A (Prxl2a) from Mus musculus (Mouse).